The following is a 436-amino-acid chain: Putative actin-fragmin kinase DDB_G0268748 (436 aa).

The interval 14-58 (DKNIDSGSSSSNIGGSSSNSSGTTNKRSSGNFNGSSASSSPSSST) is disordered. The span at 18–57 (DSGSSSSNIGGSSSNSSGTTNKRSSGNFNGSSASSSPSSS) shows a compositional bias: low complexity.

It belongs to the protein kinase superfamily. AFK Ser/Thr protein kinase family.

The protein is Putative actin-fragmin kinase DDB_G0268748 of Dictyostelium discoideum (Social amoeba).